A 436-amino-acid polypeptide reads, in one-letter code: Bifunctional protein GlmU (436 aa).

The tract at residues 1-225 is pyrophosphorylase; sequence MNNNTSIIIL…EQNFMGINDK (225 aa). Residues 10–13, Lys24, Gln76, and 83–84 contribute to the UDP-N-acetyl-alpha-D-glucosamine site; these read LAAG and GT. Asp104 is a Mg(2+) binding site. Positions 137, 151, 166, and 223 each coordinate UDP-N-acetyl-alpha-D-glucosamine. Asn223 contributes to the Mg(2+) binding site. Residues 226-246 form a linker region; that stretch reads FQLSIAEKIMQDEIKQNLMKA. The segment at 247-436 is N-acetyltransferase; it reads GVLMRMPESI…KFFGKDDVKK (190 aa). Arg310 and Lys327 together coordinate UDP-N-acetyl-alpha-D-glucosamine. His338 serves as the catalytic Proton acceptor. Tyr341 and Asn352 together coordinate UDP-N-acetyl-alpha-D-glucosamine. Residues 361–362, Ser380, Ala398, and Arg415 contribute to the acetyl-CoA site; that span reads NY.

It in the N-terminal section; belongs to the N-acetylglucosamine-1-phosphate uridyltransferase family. This sequence in the C-terminal section; belongs to the transferase hexapeptide repeat family. In terms of assembly, homotrimer. Requires Mg(2+) as cofactor.

The protein localises to the cytoplasm. The enzyme catalyses alpha-D-glucosamine 1-phosphate + acetyl-CoA = N-acetyl-alpha-D-glucosamine 1-phosphate + CoA + H(+). It catalyses the reaction N-acetyl-alpha-D-glucosamine 1-phosphate + UTP + H(+) = UDP-N-acetyl-alpha-D-glucosamine + diphosphate. It participates in nucleotide-sugar biosynthesis; UDP-N-acetyl-alpha-D-glucosamine biosynthesis; N-acetyl-alpha-D-glucosamine 1-phosphate from alpha-D-glucosamine 6-phosphate (route II): step 2/2. The protein operates within nucleotide-sugar biosynthesis; UDP-N-acetyl-alpha-D-glucosamine biosynthesis; UDP-N-acetyl-alpha-D-glucosamine from N-acetyl-alpha-D-glucosamine 1-phosphate: step 1/1. It functions in the pathway bacterial outer membrane biogenesis; LPS lipid A biosynthesis. In terms of biological role, catalyzes the last two sequential reactions in the de novo biosynthetic pathway for UDP-N-acetylglucosamine (UDP-GlcNAc). The C-terminal domain catalyzes the transfer of acetyl group from acetyl coenzyme A to glucosamine-1-phosphate (GlcN-1-P) to produce N-acetylglucosamine-1-phosphate (GlcNAc-1-P), which is converted into UDP-GlcNAc by the transfer of uridine 5-monophosphate (from uridine 5-triphosphate), a reaction catalyzed by the N-terminal domain. The chain is Bifunctional protein GlmU from Campylobacter concisus (strain 13826).